Consider the following 291-residue polypeptide: Light-independent protochlorophyllide reductase iron-sulfur ATP-binding protein (291 aa).

ATP contacts are provided by residues 10–15 (GIGKST) and Lys-39. Ser-14 is a binding site for Mg(2+). [4Fe-4S] cluster is bound by residues Cys-95 and Cys-129. An ATP-binding site is contributed by 180 to 181 (NR).

This sequence belongs to the NifH/BchL/ChlL family. As to quaternary structure, homodimer. Protochlorophyllide reductase is composed of three subunits; ChlL, ChlN and ChlB. [4Fe-4S] cluster serves as cofactor.

The protein resides in the plastid. The protein localises to the chloroplast. The enzyme catalyses chlorophyllide a + oxidized 2[4Fe-4S]-[ferredoxin] + 2 ADP + 2 phosphate = protochlorophyllide a + reduced 2[4Fe-4S]-[ferredoxin] + 2 ATP + 2 H2O. It participates in porphyrin-containing compound metabolism; chlorophyll biosynthesis (light-independent). Functionally, component of the dark-operative protochlorophyllide reductase (DPOR) that uses Mg-ATP and reduced ferredoxin to reduce ring D of protochlorophyllide (Pchlide) to form chlorophyllide a (Chlide). This reaction is light-independent. The L component serves as a unique electron donor to the NB-component of the complex, and binds Mg-ATP. This is Light-independent protochlorophyllide reductase iron-sulfur ATP-binding protein from Larix decidua (European larch).